The primary structure comprises 89 residues: LSM complex subunit LSM3 (89 aa).

The 80-residue stretch at threonine 3–aspartate 82 folds into the Sm domain.

The protein belongs to the snRNP Sm proteins family. As to quaternary structure, component of the heptameric LSM1-LSM7 complex that forms a seven-membered ring structure with a donut shape. The LSm subunits are arranged in the order LSM1, LSM2, LSM3, LSM6, LSM5, LSM7 and LSM4. Except for LSM1, where a C-terminal helix crosses the ring structure to form additional interactions with LSM3 and LSM6, each subunit interacts only with its two neighboring subunits. The LSM1-LSM7 complex interacts with PAT1; within the complex PAT1 has direct interactions with LSM2 and LSM3. The LSM1-LSM7 complex interacts with XRN1. Component of the heptameric LSM2-LSM8 complex that forms a seven-membered ring structure with a donut shape; an RNA strand can pass through the hole in the center of the ring structure. The LSm subunits are arranged in the order LSM8, LSM2, LSM3, LSM6, LSM5, LSM7 and LSM4. Component of the spliceosome U4/U6-U5 tri-snRNP complex composed of the U4, U6 and U5 snRNAs and at least PRP3, PRP4, PRP6, PRP8, PRP18, PRP31, PRP38, SNU13, SNU23, SNU66, SNU114, SPP381, SMB1, SMD1, SMD2, SMD3, SMX2, SMX3, LSM2, LSM3, LSM4, LSM5, LSM6, LSM7, LSM8, BRR2 and DIB1. May be found in a complex comprising LSM2-LSM7 without LSM1 or LSM8; the complex associates with pre-P RNA and snoRNA SNR5.

Its subcellular location is the nucleus. It localises to the nucleolus. The protein resides in the cytoplasm. Functionally, component of LSm protein complexes, which are involved in RNA processing and may function in a chaperone-like manner. Component of the cytoplasmic LSM1-LSM7 complex which is involved in mRNA degradation by activating the decapping step. Together with PAT1, the LSM1-LSM7 complex binds to osmotic stress-activated mRNAs to attenuate the osmotic stress response, probably by limiting ribosome access to the mRNA and consequently translation. Component of the nuclear LSM2-LSM8 complex, which is involved in spliceosome assembly. The LSM2-LSM8 complex plays a role in the biogenesis of the spliceosomal U4/U6-U5 tri-snRNP complex by accelerating PRP24-mediated annealing of U4/U6 di-snRNA. The LSM2-LSM8 complex binds U6 snRNA terminating with a non-cyclic 3' phosphate group. LSM2-LSM8 is probably also involved in degradation of nuclear pre-mRNA by targeting them for decapping. LSM2-LSM8 could be involved in processing of pre-tRNAs, pre-rRNAs and U3 snoRNA, although involvement may be indirect. In a complex that probably contains LSM2-LSM7, but not LSM1 or LSM8, associates with the precursor of the RNA component of RNase P (pre-P RNA) and may be involved in maturing pre-P RNA; the complex also associates with snoRNA SNR5. The sequence is that of LSM complex subunit LSM3 (LSM3) from Saccharomyces cerevisiae (strain ATCC 204508 / S288c) (Baker's yeast).